The following is a 339-amino-acid chain: D-erythrose-4-phosphate dehydrogenase (339 aa).

Position 11–12 (11–12 (RI)) interacts with NAD(+). Substrate-binding positions include 158 to 160 (SCT), arginine 204, 217 to 218 (TK), and arginine 240. Cysteine 159 functions as the Nucleophile in the catalytic mechanism. Asparagine 322 serves as a coordination point for NAD(+).

This sequence belongs to the glyceraldehyde-3-phosphate dehydrogenase family. Epd subfamily. In terms of assembly, homotetramer.

It is found in the cytoplasm. It carries out the reaction D-erythrose 4-phosphate + NAD(+) + H2O = 4-phospho-D-erythronate + NADH + 2 H(+). Its pathway is cofactor biosynthesis; pyridoxine 5'-phosphate biosynthesis; pyridoxine 5'-phosphate from D-erythrose 4-phosphate: step 1/5. Functionally, catalyzes the NAD-dependent conversion of D-erythrose 4-phosphate to 4-phosphoerythronate. This Aliivibrio salmonicida (strain LFI1238) (Vibrio salmonicida (strain LFI1238)) protein is D-erythrose-4-phosphate dehydrogenase.